Consider the following 503-residue polypeptide: Cytochrome P450 714C1 (503 aa).

The Lumenal segment spans residues 1–6 (MEKLLA). Residues 7-27 (LIVVLVILLSLALFYLCNILW) form a helical; Signal-anchor for type III membrane protein membrane-spanning segment. Residues 28 to 503 (LRAVKIRKKL…GLPLMVTKLP (476 aa)) are Cytoplasmic-facing. Cysteine 450 lines the heme pocket.

The protein belongs to the cytochrome P450 family. Requires heme as cofactor.

The protein resides in the membrane. Its function is as follows. Probably not involved in gibberellin metabolism since over-expression of CYP714C1 in a heterologous system does not induce semi-dwarfism. The polypeptide is Cytochrome P450 714C1 (CYP714C1) (Oryza sativa subsp. japonica (Rice)).